Here is a 275-residue protein sequence, read N- to C-terminus: MPSPIALLTAATERIERVDAEALLLHALDCDRAWLFTHGDIPLAAAATESFQALVEQRARGIPVAYLIGRRGFWTLDVMVSSATLIPRAETETLVEQALQRLDHASERRVADLGTGSGAIALAIACERPQAQVLATDNSAAALDIAARNASAHGLNHVVFREGDWYEALLGERFDLIVSNPPYIAVTDPHLTQGDLRFEPPSALISGGDGLDALRILTAGAPAYLRPGGWLVMEHGWDQGAAMRTLLHTAGLVAVATVQDLEARDRVTVGRCPGF.

S-adenosyl-L-methionine contacts are provided by residues 114–118, aspartate 137, tryptophan 165, and asparagine 180; that span reads GTGSG. 180–183 serves as a coordination point for substrate; the sequence is NPPY.

The protein belongs to the protein N5-glutamine methyltransferase family. PrmC subfamily.

It catalyses the reaction L-glutaminyl-[peptide chain release factor] + S-adenosyl-L-methionine = N(5)-methyl-L-glutaminyl-[peptide chain release factor] + S-adenosyl-L-homocysteine + H(+). Functionally, methylates the class 1 translation termination release factors RF1/PrfA and RF2/PrfB on the glutamine residue of the universally conserved GGQ motif. The sequence is that of Release factor glutamine methyltransferase from Xylella fastidiosa (strain 9a5c).